The chain runs to 245 residues: Enolase-phosphatase E1 (245 aa).

This sequence belongs to the HAD-like hydrolase superfamily. MasA/MtnC family. As to quaternary structure, monomer. Requires Mg(2+) as cofactor.

The catalysed reaction is 5-methylsulfanyl-2,3-dioxopentyl phosphate + H2O = 1,2-dihydroxy-5-(methylsulfanyl)pent-1-en-3-one + phosphate. The protein operates within amino-acid biosynthesis; L-methionine biosynthesis via salvage pathway; L-methionine from S-methyl-5-thio-alpha-D-ribose 1-phosphate: step 3/6. It participates in amino-acid biosynthesis; L-methionine biosynthesis via salvage pathway; L-methionine from S-methyl-5-thio-alpha-D-ribose 1-phosphate: step 4/6. Bifunctional enzyme that catalyzes the enolization of 2,3-diketo-5-methylthiopentyl-1-phosphate (DK-MTP-1-P) into the intermediate 2-hydroxy-3-keto-5-methylthiopentenyl-1-phosphate (HK-MTPenyl-1-P), which is then dephosphorylated to form the acireductone 1,2-dihydroxy-3-keto-5-methylthiopentene (DHK-MTPene). In Prochlorococcus marinus (strain MIT 9313), this protein is Enolase-phosphatase E1.